A 567-amino-acid polypeptide reads, in one-letter code: Phosphoglucomutase-like protein 5 (567 aa).

Residues 1 to 26 (MEGSPIPVLTVPTAPYEDQRPTGGGG) are disordered. Thr120 bears the Phosphothreonine mark. Ser122 carries the phosphoserine modification.

The protein belongs to the phosphohexose mutase family. Interacts with DMD/dystrophin; the interaction is direct. Interacts with UTRN/utrophin.

The protein resides in the cell junction. It localises to the adherens junction. The protein localises to the cytoplasm. It is found in the cytoskeleton. Its subcellular location is the cell membrane. The protein resides in the sarcolemma. Component of adherens-type cell-cell and cell-matrix junctions. Has no phosphoglucomutase activity in vitro. In Mus musculus (Mouse), this protein is Phosphoglucomutase-like protein 5.